Reading from the N-terminus, the 278-residue chain is Large ribosomal subunit protein uL2 (278 aa).

Disordered stretches follow at residues M1 to H58 and G210 to R278. The segment covering E23–L33 has biased composition (basic and acidic residues). Positions S40–I49 are enriched in low complexity. Basic residues-rich tracts occupy residues G210–S220 and V269–R278.

This sequence belongs to the universal ribosomal protein uL2 family. Part of the 50S ribosomal subunit. Forms a bridge to the 30S subunit in the 70S ribosome.

Its function is as follows. One of the primary rRNA binding proteins. Required for association of the 30S and 50S subunits to form the 70S ribosome, for tRNA binding and peptide bond formation. It has been suggested to have peptidyltransferase activity; this is somewhat controversial. Makes several contacts with the 16S rRNA in the 70S ribosome. This chain is Large ribosomal subunit protein uL2, found in Beutenbergia cavernae (strain ATCC BAA-8 / DSM 12333 / CCUG 43141 / JCM 11478 / NBRC 16432 / NCIMB 13614 / HKI 0122).